The following is a 315-amino-acid chain: Mitochondrial glutamate carrier 2 (315 aa).

Solcar repeat units follow at residues 6–92 (LSIT…FRRL), 100–210 (RNLK…LNNL), and 219–308 (ASFA…GIGE). The next 3 helical transmembrane spans lie at 12-32 (LING…IDLA), 61-81 (FFGM…EKAI), and 106-126 (MLAG…MEML). The disordered stretch occupies residues 141 to 160 (QGSASAPSTSRSYTTGSAST). Over residues 142–159 (GSASAPSTSRSYTTGSAS) the composition is skewed to polar residues. Phosphoserine is present on S145. 3 consecutive transmembrane segments (helical) span residues 185-205 (GLGA…PLFA), 225-245 (FVSG…LDVL), and 288-308 (ALVI…GIGE).

Belongs to the mitochondrial carrier (TC 2.A.29) family. In terms of tissue distribution, expressed in brain, to a lesser extent in testis, and poorly in all the other tissues.

It is found in the mitochondrion inner membrane. It carries out the reaction L-glutamate(in) + H(+)(in) = L-glutamate(out) + H(+)(out). In terms of biological role, responsible for the transport of glutamate from the cytosol into the mitochondrial matrix with the concomitant import of a proton (symport system). This chain is Mitochondrial glutamate carrier 2, found in Homo sapiens (Human).